Consider the following 374-residue polypeptide: Eukaryotic translation initiation factor 3 subunit M (374 aa).

Ser2 carries the N-acetylserine modification. 2 positions are modified to phosphoserine: Ser2 and Ser152. Residues Ala180–His339 enclose the PCI domain. Lys254 is modified (N6-acetyllysine). At Ser367 the chain carries Phosphoserine.

The protein belongs to the eIF-3 subunit M family. As to quaternary structure, component of the eukaryotic translation initiation factor 3 (eIF-3) complex, which is composed of 13 subunits: EIF3A, EIF3B, EIF3C, EIF3D, EIF3E, EIF3F, EIF3G, EIF3H, EIF3I, EIF3J, EIF3K, EIF3L and EIF3M. The eIF-3 complex appears to include 3 stable modules: module A is composed of EIF3A, EIF3B, EIF3G and EIF3I; module B is composed of EIF3F, EIF3H, and EIF3M; and module C is composed of EIF3C, EIF3D, EIF3E, EIF3K and EIF3L. EIF3C of module C binds EIF3B of module A and EIF3H of module B, thereby linking the three modules. EIF3J is a labile subunit that binds to the eIF-3 complex via EIF3B. The eIF-3 complex interacts with RPS6KB1 under conditions of nutrient depletion. Mitogenic stimulation leads to binding and activation of a complex composed of MTOR and RPTOR, leading to phosphorylation and release of RPS6KB1 and binding of EIF4B to eIF-3.

The protein localises to the cytoplasm. Functionally, component of the eukaryotic translation initiation factor 3 (eIF-3) complex, which is required for several steps in the initiation of protein synthesis. The eIF-3 complex associates with the 40S ribosome and facilitates the recruitment of eIF-1, eIF-1A, eIF-2:GTP:methionyl-tRNAi and eIF-5 to form the 43S pre-initiation complex (43S PIC). The eIF-3 complex stimulates mRNA recruitment to the 43S PIC and scanning of the mRNA for AUG recognition. The eIF-3 complex is also required for disassembly and recycling of post-termination ribosomal complexes and subsequently prevents premature joining of the 40S and 60S ribosomal subunits prior to initiation. The eIF-3 complex specifically targets and initiates translation of a subset of mRNAs involved in cell proliferation, including cell cycling, differentiation and apoptosis, and uses different modes of RNA stem-loop binding to exert either translational activation or repression. The chain is Eukaryotic translation initiation factor 3 subunit M from Pongo abelii (Sumatran orangutan).